We begin with the raw amino-acid sequence, 400 residues long: MEVKKVVLAYSGGVDTSSCIPYLINEYGVEEVVAFAADLGQGDELEPIREKALSAGASECLVDDLVKPFIEDFAFPAIRANALYEGKYPLSTALARPLISKRLVDIAKELEADAVAHGCTGKGNDQVRFDIAIATLAPELKVLTPARQWGMSREEVIAYGERYGIPAPVSKKSPYSIDLNLLGRSVEAGPLEDISLSPPEEVYQITSSIENTPDQSQEIEIIFEGGNPIAIDGVELDPLSLIVLANQLAGKHGFGRIDMIENRVVGIKSREIYETPGLLLLIKAHQELESLTLPADVLRTKSTLETQWADLVYQGLWFSPLKNALDGFIDRTQDEVNGSVKVKLHKGNATITGRSSSQNSLYLPDFSTYGSQDKFKHDNAEGFIYIWGLPSRLWAQSKNK.

Residues 9–17 and A37 each bind ATP; that span reads AYSGGVDTS. Y88 is a binding site for L-citrulline. G118 lines the ATP pocket. L-aspartate is bound by residues T120, N124, and D125. N124 provides a ligand contact to L-citrulline. L-citrulline contacts are provided by R128, S176, S185, E261, and Y273.

It belongs to the argininosuccinate synthase family. Type 1 subfamily. In terms of assembly, homotetramer.

It localises to the cytoplasm. The catalysed reaction is L-citrulline + L-aspartate + ATP = 2-(N(omega)-L-arginino)succinate + AMP + diphosphate + H(+). It participates in amino-acid biosynthesis; L-arginine biosynthesis; L-arginine from L-ornithine and carbamoyl phosphate: step 2/3. In Prochlorococcus marinus (strain MIT 9211), this protein is Argininosuccinate synthase.